The following is a 1047-amino-acid chain: uncharacterized protein (1047 aa).

K17 bears the N6-acetyllysine mark. Disordered stretches follow at residues 172-208 (PPCSLAPAPSKGQTLDGTFLRGVPAEGSSKDSSGSFS) and 236-283 (RNSK…PQAL). S208 carries the post-translational modification Phosphoserine. Positions 237-254 (NSKQAMSEGPSSPWTQLA) are enriched in polar residues. The span at 268–283 (HYPPPHHPPPHPPQAL) shows a compositional bias: pro residues. 2 positions are modified to phosphoserine: S299 and S391. Position 397 is a phosphothreonine (T397). Disordered stretches follow at residues 448–469 (EKLQPRLSEHSGPPIVIRDSPV), 482–504 (ECQSLPQKEGARPPSSPPMPVID), 519–567 (PAPE…LRGS), 668–690 (PSTPTSAPAPTQPAPTPTSGPIG), 714–763 (VAVA…GDSL), 931–1004 (EAGA…TLKA), and 1021–1047 (PTWGHKSSRPDQPSPCPQLLDSQSHHL). A phosphoserine mark is found at S455, S496, and S497. 2 stretches are compositionally biased toward low complexity: residues 729–741 (PARAQAPASARDP) and 751–762 (PAPASTSAPGDS). 4 positions are modified to phosphoserine: S936, S956, S988, and S996. A compositionally biased stretch (low complexity) spans 978 to 996 (AAAGEESCGASPTPATSAS).

This is an uncharacterized protein from Homo sapiens (Human).